The chain runs to 314 residues: MKLLEIKIESSYDVEDALAYFATEDLKALGTEARRRSDFEQAGWLHDSTVVDMDDIPNLPDELEFIAYFDEETDPEEMVKCFKDKLAELAGYGLKTAPGEISVDYVADQDWNTVWKKYYHVINLSRHLAIVPEWEDYQPAFKDQEIIRLDPGLAFGTGNHQTTQLAMLGIERAMVKPLTVADVGTGSGILAIAAHKLGAKSVLATDISDESMTAAEENAALNGIHDIALQKTSLLADVDGKFDLIVANILAEILLDLIPQLDSHLNEDGQVIFSGIDYLQLPKIEQALAENSFQIDLKMRAGRWIGLAISRKHD.

S-adenosyl-L-methionine contacts are provided by Thr-163, Gly-184, Asp-206, and Asn-248.

It belongs to the methyltransferase superfamily. PrmA family.

The protein resides in the cytoplasm. It carries out the reaction L-lysyl-[protein] + 3 S-adenosyl-L-methionine = N(6),N(6),N(6)-trimethyl-L-lysyl-[protein] + 3 S-adenosyl-L-homocysteine + 3 H(+). Functionally, methylates ribosomal protein L11. This chain is Ribosomal protein L11 methyltransferase, found in Lactobacillus delbrueckii subsp. bulgaricus (strain ATCC 11842 / DSM 20081 / BCRC 10696 / JCM 1002 / NBRC 13953 / NCIMB 11778 / NCTC 12712 / WDCM 00102 / Lb 14).